Here is a 318-residue protein sequence, read N- to C-terminus: Molybdenum cofactor insertion chaperone PaoD (318 aa).

As to quaternary structure, homodimer in solution. Interacts with MocA.

Chaperone required for the production of an active PaoABC aldehyde oxidoreductase. Stabilizes the PaoC subunit and is required for the insertion of the molybdenum cofactor into this subunit. Binds molybdenum cofactor. Binds the molybdopterin cytosine dinucleotide (MCD) form of the cofactor after its formation by the molybdenum cofactor cytidylyltransferase MocA. This is Molybdenum cofactor insertion chaperone PaoD from Escherichia coli (strain K12).